Consider the following 305-residue polypeptide: UDP-3-O-acyl-N-acetylglucosamine deacetylase (305 aa).

The Zn(2+) site is built by His79, His238, and Asp242. His265 acts as the Proton donor in catalysis.

This sequence belongs to the LpxC family. Zn(2+) serves as cofactor.

It catalyses the reaction a UDP-3-O-[(3R)-3-hydroxyacyl]-N-acetyl-alpha-D-glucosamine + H2O = a UDP-3-O-[(3R)-3-hydroxyacyl]-alpha-D-glucosamine + acetate. Its pathway is glycolipid biosynthesis; lipid IV(A) biosynthesis; lipid IV(A) from (3R)-3-hydroxytetradecanoyl-[acyl-carrier-protein] and UDP-N-acetyl-alpha-D-glucosamine: step 2/6. Its function is as follows. Catalyzes the hydrolysis of UDP-3-O-myristoyl-N-acetylglucosamine to form UDP-3-O-myristoylglucosamine and acetate, the committed step in lipid A biosynthesis. The sequence is that of UDP-3-O-acyl-N-acetylglucosamine deacetylase from Colwellia psychrerythraea (strain 34H / ATCC BAA-681) (Vibrio psychroerythus).